Here is a 702-residue protein sequence, read N- to C-terminus: Elongation factor G (702 aa).

Residues 8–290 (ARYRNIGISA…AVIEYLPAPT (283 aa)) enclose the tr-type G domain. GTP contacts are provided by residues 17–24 (AHIDAGKT), 88–92 (DTPGH), and 142–145 (NKMD).

It belongs to the TRAFAC class translation factor GTPase superfamily. Classic translation factor GTPase family. EF-G/EF-2 subfamily.

It is found in the cytoplasm. In terms of biological role, catalyzes the GTP-dependent ribosomal translocation step during translation elongation. During this step, the ribosome changes from the pre-translocational (PRE) to the post-translocational (POST) state as the newly formed A-site-bound peptidyl-tRNA and P-site-bound deacylated tRNA move to the P and E sites, respectively. Catalyzes the coordinated movement of the two tRNA molecules, the mRNA and conformational changes in the ribosome. The chain is Elongation factor G from Photorhabdus laumondii subsp. laumondii (strain DSM 15139 / CIP 105565 / TT01) (Photorhabdus luminescens subsp. laumondii).